We begin with the raw amino-acid sequence, 470 residues long: ATP synthase subunit beta (470 aa).

Position 156 to 163 (156 to 163) interacts with ATP; sequence GGAGVGKT.

Belongs to the ATPase alpha/beta chains family. F-type ATPases have 2 components, CF(1) - the catalytic core - and CF(0) - the membrane proton channel. CF(1) has five subunits: alpha(3), beta(3), gamma(1), delta(1), epsilon(1). CF(0) has three main subunits: a(1), b(2) and c(9-12). The alpha and beta chains form an alternating ring which encloses part of the gamma chain. CF(1) is attached to CF(0) by a central stalk formed by the gamma and epsilon chains, while a peripheral stalk is formed by the delta and b chains.

The protein localises to the cell inner membrane. The enzyme catalyses ATP + H2O + 4 H(+)(in) = ADP + phosphate + 5 H(+)(out). Its function is as follows. Produces ATP from ADP in the presence of a proton gradient across the membrane. The catalytic sites are hosted primarily by the beta subunits. The chain is ATP synthase subunit beta from Nitratidesulfovibrio vulgaris (strain ATCC 29579 / DSM 644 / CCUG 34227 / NCIMB 8303 / VKM B-1760 / Hildenborough) (Desulfovibrio vulgaris).